The chain runs to 175 residues: MQSFRLHRINREITIKKIRLTGADGKQIGVVNFNEAIKQAEDLELDLVEISPNSDPPVCKIMNYGKFLYEKNKSTKEQKKKQKIIHIKEIKFRPGTDEGDYQVKLRNIIKFLNDGYKIKITLRFRGGELIHQQIGVRVLHRISQDLHDLMTVEIFPNKVEGRQMTMILAPKKKPV.

Belongs to the IF-3 family. Monomer.

It is found in the cytoplasm. In terms of biological role, IF-3 binds to the 30S ribosomal subunit and shifts the equilibrium between 70S ribosomes and their 50S and 30S subunits in favor of the free subunits, thus enhancing the availability of 30S subunits on which protein synthesis initiation begins. The protein is Translation initiation factor IF-3 of Blochmanniella floridana.